We begin with the raw amino-acid sequence, 161 residues long: uncharacterized protein (161 aa).

This is an uncharacterized protein from Mycobacterium bovis (strain ATCC BAA-935 / AF2122/97).